The following is a 204-amino-acid chain: Large ribosomal subunit protein uL4 (204 aa).

Positions 56–79 (VSGTTAKPYGQKRTGRARQGSLRS) are disordered.

It belongs to the universal ribosomal protein uL4 family. In terms of assembly, part of the 50S ribosomal subunit.

Its function is as follows. One of the primary rRNA binding proteins, this protein initially binds near the 5'-end of the 23S rRNA. It is important during the early stages of 50S assembly. It makes multiple contacts with different domains of the 23S rRNA in the assembled 50S subunit and ribosome. Functionally, forms part of the polypeptide exit tunnel. This is Large ribosomal subunit protein uL4 from Wolbachia pipientis subsp. Culex pipiens (strain wPip).